Reading from the N-terminus, the 461-residue chain is MILCSYWHVGLVLLLFSCCGLVLGSEHETRLVANLLENYNKVIRPVEHHTHFVDITVGLQLIQLISVDEVNQIVETNVRLRQQWIDVRLRWNPADYGGIKKIRLPSDDVWLPDLVLYNNADGDFAIVHMTKLLLDYTGKIMWTPPAIFKSYCEIIVTHFPFDQQNCTMKLGIWTYDGTKVSISPESDRPDLSTFMESGEWVMKDYRGWKHWVYYTCCPDTPYLDITYHFIMQRIPLYFVVNVIIPCLLFSFLTGLVFYLPTDSGEKMTLSISVLLSLTVFLLVIVELIPSTSSAVPLIGKYMLFTMIFVISSIIITVVVINTHHRSPSTHTMPQWVRKIFIDTIPNVMFFSTMKRASKEKQENKIFADDIDISDISGKQVTGEVIFQTPLIKNPDVKSAIEGVKYIAEHMKSDEESSNAAEEWKYVAMVIDHILLCVFMLICIIGTVSVFAGRLIELSQEG.

Residues 1–24 (MILCSYWHVGLVLLLFSCCGLVLG) form the signal peptide. The Extracellular portion of the chain corresponds to 25 to 234 (SEHETRLVAN…ITYHFIMQRI (210 aa)). 2 disulfides stabilise this stretch: cysteine 152-cysteine 166 and cysteine 216-cysteine 217. An N-linked (GlcNAc...) asparagine glycan is attached at asparagine 165. Transmembrane regions (helical) follow at residues 235 to 259 (PLYF…VFYL), 267 to 285 (MTLS…LVIV), and 301 to 320 (YMLF…VVVI). The Cytoplasmic segment spans residues 321–432 (NTHHRSPSTH…WKYVAMVIDH (112 aa)). Residues 433–451 (ILLCVFMLICIIGTVSVFA) form a helical membrane-spanning segment.

This sequence belongs to the ligand-gated ion channel (TC 1.A.9) family. Acetylcholine receptor (TC 1.A.9.1) subfamily. Alpha-1/CHRNA1 sub-subfamily. As to quaternary structure, pentamer of two alpha chains, and one each of the beta, delta, and gamma chains.

The protein localises to the postsynaptic cell membrane. Its subcellular location is the cell membrane. The catalysed reaction is K(+)(in) = K(+)(out). The enzyme catalyses Na(+)(in) = Na(+)(out). Upon acetylcholine binding, the AChR responds by an extensive change in conformation that affects all subunits and leads to opening of an ion-conducting channel across the plasma membrane. This is Acetylcholine receptor subunit alpha (CHRNA1) from Tetronarce californica (Pacific electric ray).